The chain runs to 269 residues: 4-hydroxy-tetrahydrodipicolinate reductase (269 aa).

NAD(+) contacts are provided by residues 8–13 (GAGGRM) and glutamate 34. Arginine 35 contacts NADP(+). NAD(+) contacts are provided by residues 98-100 (GTT) and 122-125 (ASNY). The Proton donor/acceptor role is filled by histidine 155. Histidine 156 is a (S)-2,3,4,5-tetrahydrodipicolinate binding site. Lysine 159 acts as the Proton donor in catalysis. 165–166 (GT) provides a ligand contact to (S)-2,3,4,5-tetrahydrodipicolinate.

It belongs to the DapB family.

It is found in the cytoplasm. The catalysed reaction is (S)-2,3,4,5-tetrahydrodipicolinate + NAD(+) + H2O = (2S,4S)-4-hydroxy-2,3,4,5-tetrahydrodipicolinate + NADH + H(+). It carries out the reaction (S)-2,3,4,5-tetrahydrodipicolinate + NADP(+) + H2O = (2S,4S)-4-hydroxy-2,3,4,5-tetrahydrodipicolinate + NADPH + H(+). It participates in amino-acid biosynthesis; L-lysine biosynthesis via DAP pathway; (S)-tetrahydrodipicolinate from L-aspartate: step 4/4. In terms of biological role, catalyzes the conversion of 4-hydroxy-tetrahydrodipicolinate (HTPA) to tetrahydrodipicolinate. This Haemophilus ducreyi (strain 35000HP / ATCC 700724) protein is 4-hydroxy-tetrahydrodipicolinate reductase.